Reading from the N-terminus, the 114-residue chain is UPF0145 protein YG5714_0873 (114 aa).

Belongs to the UPF0145 family.

The chain is UPF0145 protein YG5714_0873 from Saccharolobus islandicus (strain Y.G.57.14 / Yellowstone #1) (Sulfolobus islandicus).